We begin with the raw amino-acid sequence, 268 residues long: Tryptophan synthase alpha chain (268 aa).

Active-site proton acceptor residues include glutamate 49 and aspartate 60.

Belongs to the TrpA family. Tetramer of two alpha and two beta chains.

The catalysed reaction is (1S,2R)-1-C-(indol-3-yl)glycerol 3-phosphate + L-serine = D-glyceraldehyde 3-phosphate + L-tryptophan + H2O. It functions in the pathway amino-acid biosynthesis; L-tryptophan biosynthesis; L-tryptophan from chorismate: step 5/5. Functionally, the alpha subunit is responsible for the aldol cleavage of indoleglycerol phosphate to indole and glyceraldehyde 3-phosphate. The protein is Tryptophan synthase alpha chain of Escherichia coli (strain ATCC 8739 / DSM 1576 / NBRC 3972 / NCIMB 8545 / WDCM 00012 / Crooks).